We begin with the raw amino-acid sequence, 145 residues long: Large ribosomal subunit protein uL11 (145 aa).

This sequence belongs to the universal ribosomal protein uL11 family. In terms of assembly, part of the ribosomal stalk of the 50S ribosomal subunit. Interacts with L10 and the large rRNA to form the base of the stalk. L10 forms an elongated spine to which L12 dimers bind in a sequential fashion forming a multimeric L10(L12)X complex. Post-translationally, one or more lysine residues are methylated.

In terms of biological role, forms part of the ribosomal stalk which helps the ribosome interact with GTP-bound translation factors. This chain is Large ribosomal subunit protein uL11, found in Rickettsia peacockii (strain Rustic).